The primary structure comprises 648 residues: DNA ligase (648 aa).

NAD(+) is bound by residues 30-34 (DEEYD), 79-80 (SM), and Glu108. Catalysis depends on Lys110, which acts as the N6-AMP-lysine intermediate. Positions 131, 165, 280, and 304 each coordinate NAD(+). 4 residues coordinate Zn(2+): Cys398, Cys401, Cys414, and Cys419. The 76-residue stretch at 573 to 648 (AKENPFKGKI…LTEDEMRAML (76 aa)) folds into the BRCT domain.

The protein belongs to the NAD-dependent DNA ligase family. LigA subfamily. The cofactor is Mg(2+). Mn(2+) is required as a cofactor.

It carries out the reaction NAD(+) + (deoxyribonucleotide)n-3'-hydroxyl + 5'-phospho-(deoxyribonucleotide)m = (deoxyribonucleotide)n+m + AMP + beta-nicotinamide D-nucleotide.. Its function is as follows. DNA ligase that catalyzes the formation of phosphodiester linkages between 5'-phosphoryl and 3'-hydroxyl groups in double-stranded DNA using NAD as a coenzyme and as the energy source for the reaction. It is essential for DNA replication and repair of damaged DNA. The protein is DNA ligase of Sulfurovum sp. (strain NBC37-1).